Here is a 436-residue protein sequence, read N- to C-terminus: Glutamyl-tRNA reductase (436 aa).

Residues 50-53 (TCNR), Ser-110, 115-117 (ETQ), and Gln-121 contribute to the substrate site. Cys-51 acts as the Nucleophile in catalysis. Position 190 to 195 (190 to 195 (GLGEMS)) interacts with NADP(+).

It belongs to the glutamyl-tRNA reductase family. In terms of assembly, homodimer.

It catalyses the reaction (S)-4-amino-5-oxopentanoate + tRNA(Glu) + NADP(+) = L-glutamyl-tRNA(Glu) + NADPH + H(+). It functions in the pathway porphyrin-containing compound metabolism; protoporphyrin-IX biosynthesis; 5-aminolevulinate from L-glutamyl-tRNA(Glu): step 1/2. Catalyzes the NADPH-dependent reduction of glutamyl-tRNA(Glu) to glutamate 1-semialdehyde (GSA). The chain is Glutamyl-tRNA reductase from Wolinella succinogenes (strain ATCC 29543 / DSM 1740 / CCUG 13145 / JCM 31913 / LMG 7466 / NCTC 11488 / FDC 602W) (Vibrio succinogenes).